Consider the following 591-residue polypeptide: CTP synthase 1-A (591 aa).

One can recognise a Glutamine amidotransferase type-1 domain in the interval serine 300–tyrosine 554. Active-site for GATase activity residues include cysteine 399, histidine 526, and glutamate 528.

Belongs to the CTP synthase family.

It catalyses the reaction UTP + L-glutamine + ATP + H2O = CTP + L-glutamate + ADP + phosphate + 2 H(+). It functions in the pathway pyrimidine metabolism; CTP biosynthesis via de novo pathway; CTP from UDP: step 2/2. This enzyme is involved in the de novo synthesis of CTP, a precursor of DNA, RNA and phospholipids. Catalyzes the ATP-dependent amination of UTP to CTP with either L-glutamine or ammonia as a source of nitrogen. The chain is CTP synthase 1-A (ctps1-a) from Xenopus laevis (African clawed frog).